Here is a 355-residue protein sequence, read N- to C-terminus: Phosphoribosylformylglycinamidine cyclo-ligase (355 aa).

The protein belongs to the AIR synthase family.

The protein resides in the cytoplasm. It catalyses the reaction 2-formamido-N(1)-(5-O-phospho-beta-D-ribosyl)acetamidine + ATP = 5-amino-1-(5-phospho-beta-D-ribosyl)imidazole + ADP + phosphate + H(+). Its pathway is purine metabolism; IMP biosynthesis via de novo pathway; 5-amino-1-(5-phospho-D-ribosyl)imidazole from N(2)-formyl-N(1)-(5-phospho-D-ribosyl)glycinamide: step 2/2. This Paraburkholderia xenovorans (strain LB400) protein is Phosphoribosylformylglycinamidine cyclo-ligase.